A 331-amino-acid chain; its full sequence is ADP-L-glycero-D-manno-heptose-6-epimerase (331 aa).

Residues phenylalanine 11 to isoleucine 12, aspartate 32 to asparagine 33, lysine 39, lysine 54, leucine 75 to threonine 79, and asparagine 92 contribute to the NADP(+) site. Residue tyrosine 139 is the Proton acceptor of the active site. An NADP(+)-binding site is contributed by lysine 143. Asparagine 168 contacts substrate. The NADP(+) site is built by valine 169 and lysine 177. Catalysis depends on lysine 177, which acts as the Proton acceptor. Substrate-binding positions include arginine 179, glutamine 186, phenylalanine 200–histidine 203, histidine 213, and tyrosine 292.

The protein belongs to the NAD(P)-dependent epimerase/dehydratase family. HldD subfamily. In terms of assembly, homopentamer. NADP(+) serves as cofactor.

The catalysed reaction is ADP-D-glycero-beta-D-manno-heptose = ADP-L-glycero-beta-D-manno-heptose. Its pathway is nucleotide-sugar biosynthesis; ADP-L-glycero-beta-D-manno-heptose biosynthesis; ADP-L-glycero-beta-D-manno-heptose from D-glycero-beta-D-manno-heptose 7-phosphate: step 4/4. In terms of biological role, catalyzes the interconversion between ADP-D-glycero-beta-D-manno-heptose and ADP-L-glycero-beta-D-manno-heptose via an epimerization at carbon 6 of the heptose. This Cupriavidus pinatubonensis (strain JMP 134 / LMG 1197) (Cupriavidus necator (strain JMP 134)) protein is ADP-L-glycero-D-manno-heptose-6-epimerase.